Consider the following 421-residue polypeptide: Acetate kinase (421 aa).

N7 contributes to the Mg(2+) binding site. K14 provides a ligand contact to ATP. R91 provides a ligand contact to substrate. The Proton donor/acceptor role is filled by D148. Residues 208–212 (HIGNG) and 283–285 (DRR) each bind ATP. E387 lines the Mg(2+) pocket.

This sequence belongs to the acetokinase family. In terms of assembly, homodimer. It depends on Mg(2+) as a cofactor. Requires Mn(2+) as cofactor.

It is found in the cytoplasm. The catalysed reaction is acetate + ATP = acetyl phosphate + ADP. It participates in metabolic intermediate biosynthesis; acetyl-CoA biosynthesis; acetyl-CoA from acetate: step 1/2. Catalyzes the formation of acetyl phosphate from acetate and ATP. Can also catalyze the reverse reaction. In Geobacter sulfurreducens (strain ATCC 51573 / DSM 12127 / PCA), this protein is Acetate kinase.